A 356-amino-acid polypeptide reads, in one-letter code: NADH-quinone oxidoreductase subunit H (356 aa).

The next 8 membrane-spanning stretches (helical) occupy residues 18 to 38, 87 to 107, 120 to 140, 166 to 186, 202 to 222, 265 to 285, 292 to 312, and 328 to 348; these read IVMVAQSVLLLVVLLIAIAYI, GVFLLAPLVTCVLALAAWAVI, VGILYIFAISSLSIYGIIMAG, IGFVFITVLLCAGSLNLSAIV, WLTFLNWYWLPLLPMFVVFYV, AITTMCAMGAILFMGGWLPPI, WVPGVIWFSLKLFFMFFLFAM, and LGWKVFLPLSLAMVVIVAGVL.

The protein belongs to the complex I subunit 1 family. In terms of assembly, NDH-1 is composed of 14 different subunits. Subunits NuoA, H, J, K, L, M, N constitute the membrane sector of the complex.

The protein localises to the cell inner membrane. The enzyme catalyses a quinone + NADH + 5 H(+)(in) = a quinol + NAD(+) + 4 H(+)(out). Its function is as follows. NDH-1 shuttles electrons from NADH, via FMN and iron-sulfur (Fe-S) centers, to quinones in the respiratory chain. The immediate electron acceptor for the enzyme in this species is believed to be ubiquinone. Couples the redox reaction to proton translocation (for every two electrons transferred, four hydrogen ions are translocated across the cytoplasmic membrane), and thus conserves the redox energy in a proton gradient. This subunit may bind ubiquinone. This chain is NADH-quinone oxidoreductase subunit H, found in Nitrobacter hamburgensis (strain DSM 10229 / NCIMB 13809 / X14).